The primary structure comprises 92 residues: Small ribosomal subunit protein bS20 (92 aa).

Residues 1-25 (MANSAQARKRARQAAKANSHNSALR) form a disordered region.

It belongs to the bacterial ribosomal protein bS20 family.

Its function is as follows. Binds directly to 16S ribosomal RNA. The sequence is that of Small ribosomal subunit protein bS20 from Paraburkholderia phytofirmans (strain DSM 17436 / LMG 22146 / PsJN) (Burkholderia phytofirmans).